The chain runs to 1216 residues: Metabotropic glycine receptor (1216 aa).

An N-terminal signal peptide occupies residues 1 to 23 (MGVMAYPFLFCLLLVHFGLGAIG). Residues 24–417 (ASREAPSRPD…CFVQEDKYLR (394 aa)) lie on the Extracellular side of the membrane. The tract at residues 25-65 (SREAPSRPDPPRERTLRAKQHAQQPARASASDPSAPWSRST) is disordered. Positions 28 to 40 (APSRPDPPRERTL) are enriched in basic and acidic residues. Positions 46-64 (AQQPARASASDPSAPWSRS) are enriched in low complexity. Residues 85–281 (YLYTGDSHKL…CENGSYKPGW (197 aa)) form a cache-like region region. N-linked (GlcNAc...) asparagine glycans are attached at residues Asn98 and Asn143. A disulfide bridge links Cys99 with Cys272. Residues Ser172 and Arg173 each coordinate glycine. A glycan (N-linked (GlcNAc...) asparagine) is linked at Asn215. A glycine-binding site is contributed by Glu271. An N-linked (GlcNAc...) asparagine glycan is attached at Asn274. Residue Asp307 coordinates glycine. The N-linked (GlcNAc...) asparagine glycan is linked to Asn333. The helical transmembrane segment at 418-439 (LAIISFQALCMLLDFLSMLVVY) threads the bilayer. Topologically, residues 440-451 (RFRKAKSIRASG) are cytoplasmic. Residues 452-474 (LILLETILFGSLLLYFPVVILYF) traverse the membrane as a helical segment. The Extracellular portion of the chain corresponds to 475-478 (EPST). Residues 479 to 501 (FRCILLRWVRLLGFATVYGTVTL) form a helical membrane-spanning segment. A disulfide bridge connects residues Cys481 and Cys573. Residues 502–525 (KLHRVLKVFLSRTAQRIPYMTGGR) are Cytoplasmic-facing. The helical transmembrane segment at 526–547 (VMRMLAVILLVVFWFLVGWTSS) threads the bilayer. The Extracellular segment spans residues 548 to 576 (VCQNLERHISLIGQGRTSDHLIFSMCLVE). The helical transmembrane segment at 577–597 (RWDYMTAAAEFLFLLWGVYLC) threads the bilayer. The Cytoplasmic portion of the chain corresponds to 598–611 (YAVRTVPSAFHEPR). Residues 612-633 (YMAVAVHNELIISAIFHTIRFV) form a helical membrane-spanning segment. Residues 634 to 642 (LASRLQSDW) lie on the Extracellular side of the membrane. The helical transmembrane segment at 643 to 664 (MLMLYFAHTHLTVTVTIGLLLI) threads the bilayer. The Cytoplasmic portion of the chain corresponds to 665–1216 (PKFSHSSNNP…NEEVRLARKV (552 aa)). 3 positions are modified to phosphoserine: Ser694, Ser705, and Ser708. 2 disordered regions span residues 757-875 (RITE…ESVP) and 911-1000 (KEKT…HMKD). Positions 769–781 (CSKEDKDGGEHGS) are enriched in basic and acidic residues. Lys774 participates in a covalent cross-link: Glycyl lysine isopeptide (Lys-Gly) (interchain with G-Cter in ubiquitin). Residues 864–873 (EDSQAVSTES) show a composition bias toward polar residues. Position 866 is a phosphoserine (Ser866). The span at 926–944 (VEERAKAQKALPRERETNR) shows a compositional bias: basic and acidic residues. Polar residues-rich tracts occupy residues 945–963 (KYSN…PNSS) and 980–991 (QRANPTTANSDL). Ser947 is subject to Phosphoserine. Positions 1007–1011 (VCPWE) match the VCPWE motif 1 motif. Positions 1038-1072 (ERNPTFSLKEKSHPKPKAADLCQQSNPKSVDKAEV) are disordered. Ser1066 is modified (phosphoserine). Residues 1072–1076 (VCPWE) carry the VCPWE motif 2 motif. Ser1081 carries the phosphoserine modification. The disordered stretch occupies residues 1128–1167 (SKVENENLNQLGEQEKKTSSSERNVPDSHNSSNNFQPPLM). Residues 1140-1153 (EQEKKTSSSERNVP) show a composition bias toward basic and acidic residues. Residues 1154 to 1163 (DSHNSSNNFQ) are compositionally biased toward polar residues. Residues 1172–1176 (VCPWE) carry the VCPWE motif 3 motif.

It belongs to the G-protein coupled receptor 3 family. Homodimer. Associates with the RGS7-GNB5 complex, promoting its localization to the cell membrane and regulating its GTPase activator activity. Interacts (via VCPWE motifs) with GNAO1. Interacts with GPC4. Interacts with EGFLAM.

The protein localises to the cell membrane. The protein resides in the postsynaptic cell membrane. It is found in the presynaptic cell membrane. Its subcellular location is the nucleus. Its function is as follows. Metabotropic receptor for glycine that controls synapse formation and function in the brain. Acts as an atypical G-protein coupled receptor that recruits and regulates the RGS7-GNB5 complex instead of activating G proteins. In absence of glycine ligand, promotes the GTPase activator activity of RGS7, increasing the GTPase activity of G protein alpha subunits, thereby driving them into their inactive GDP-bound form. Glycine-binding changes the conformation of the intracellular surface, inhibiting the GTPase activator activity of the RGS7-GNB5 complex, promoting G protein alpha subunits into their active GTP-bound form and regulating cAMP levels. Also able to bind taurine, a compound closely related to glycine, but with a two-fold lower affinity. Glycine receptor-dependent regulation of cAMP controls key ion channels, kinases and neurotrophic factors involved in neuronal excitability and synaptic transmission. Plays a pivotal role in regulating mood and cognition via its ability to regulate neuronal excitability in L2/L3 pyramidal neurons of the prefrontal cortex. Also involved in spatial learning by regulating hippocampal CA1 neuronal excitability. Acts as a synaptic organizer in the hippocampus, required for proper mossy fiber-CA3 neurocircuitry establishment, structure and function: induces presynaptic differentiation in contacting axons via its interaction with GPC4. In addition to glycine, may also act as a receptor for osteocalcin (BGLAP) hormone: osteocalcin-binding initiates a signaling response that prevents neuronal apoptosis in the hippocampus and regulates the synthesis of neurotransmitters. This Bos taurus (Bovine) protein is Metabotropic glycine receptor (GPR158).